The primary structure comprises 438 residues: Mannose-1-phosphate guanylyltransferase regulatory subunit alpha (438 aa).

A substrate-binding domain region spans residues 2–260; the sequence is LKAVILIGGP…PNWWSQLKTA (259 aa). GDP-alpha-D-mannose contacts are provided by Glu-87 and Gln-256. The segment at 282–438 is hexapeptide repeat domain; it reads LANVGIKRGE…SRSFKNEIIL (157 aa). Positions 373–402 are C-loop; sequence TPSDPDPNKPFAKMENPPLFNNEGKLNPSI.

Belongs to the transferase hexapeptide repeat family. Component of the GMPPA-GMPPB mannose-1-phosphate guanylyltransferase complex composed of 4 GMPPA subunits and 8 GMPPB subunits; the complex is organized into three layers, a central layer made up of 2 GMPPA dimers sandwiched between two layers each made up of 2 GMPPB dimers.

Regulatory subunit of the GMPPA-GMPPB mannose-1-phosphate guanylyltransferase complex; reduces the catalytic activity of GMPPB when part of the complex. Mediates allosteric feedback inhibition of GMPPB catalytic activity upon binding GDP-alpha-D-mannose. Together with GMPPB regulates GDP-alpha-D-mannose levels. This Drosophila melanogaster (Fruit fly) protein is Mannose-1-phosphate guanylyltransferase regulatory subunit alpha.